The sequence spans 46 residues: Photosystem II reaction center protein K (46 aa).

Residues 1–9 (MIDALVLVA) constitute a propeptide that is removed on maturation. At 10-19 (KLPEAYAIFD) the chain is on the lumenal side. Residues 20 to 39 (PLVDVLPVIPVLFLALAFVW) form a helical membrane-spanning segment. The Cytoplasmic portion of the chain corresponds to 40 to 46 (QAAVGFR).

This sequence belongs to the PsbK family. In terms of assembly, PSII is composed of 1 copy each of membrane proteins PsbA, PsbB, PsbC, PsbD, PsbE, PsbF, PsbH, PsbI, PsbJ, PsbK, PsbL, PsbM, PsbT, PsbX, PsbY, PsbZ, Psb30/Ycf12, peripheral proteins PsbO, CyanoQ(PsbQ), PsbU, PsbV and a large number of cofactors. It forms dimeric complexes. Part of a photosystem II (PSII) assembly intermediate complex PSII-I; crystallized from a strain deleted of psbJ, it forms monomeric PSII before addition of the oxygen evolving complex. PSII-I includes 3 assembly factors not found in mature PSII (Psb27, Psb28 and Psb34). Requires PSII binds multiple chlorophylls, carotenoids and specific lipids. as cofactor.

It is found in the cellular thylakoid membrane. One of the components of the core complex of photosystem II (PSII). PSII is a light-driven water:plastoquinone oxidoreductase that uses light energy to abstract electrons from H(2)O, generating O(2) and a proton gradient subsequently used for ATP formation. It consists of a core antenna complex that captures photons, and an electron transfer chain that converts photonic excitation into a charge separation. Required for association of PsbZ and Psb30/Ycf12 with PSII. This chain is Photosystem II reaction center protein K, found in Thermosynechococcus vestitus (strain NIES-2133 / IAM M-273 / BP-1).